We begin with the raw amino-acid sequence, 399 residues long: Putative 3'-5' exonuclease R431 (399 aa).

The 3'-5' exonuclease domain occupies 118–297; that stretch reads FQIVDNWIEN…IYNELQLMTN (180 aa). One can recognise an R3H domain in the interval 335–399; that stretch reads ERRLKSIESK…NKYVIITRHC (65 aa).

The chain is Putative 3'-5' exonuclease R431 from Acanthamoeba polyphaga (Amoeba).